The primary structure comprises 431 residues: Fibrinogen C domain-containing protein 1 (431 aa).

Topologically, residues 1-3 (MLC) are cytoplasmic. The chain crosses the membrane as a helical; Signal-anchor for type II membrane protein span at residues 4–24 (TVLLALAVLLAVAVTGAVLFL). The Extracellular portion of the chain corresponds to 25–431 (NHTHTPGTAP…MKIRPVREDR (407 aa)). In terms of domain architecture, Fibrinogen C-terminal spans 205–428 (CATGSRPRDC…FSEMKIRPVR (224 aa)). A disulfide bond links C214 and C243. An N-linked (GlcNAc...) asparagine glycan is attached at N310. D363 and D365 together coordinate Ca(2+). A disulfide bond links C371 and C384.

In terms of assembly, homotetramer; disulfide-linked.

It is found in the membrane. Its function is as follows. Acetyl group-binding receptor which shows a high-affinity and calcium-dependent binding to acetylated structures such as chitin, some N-acetylated carbohydrates, and amino acids, but not to their non-acetylated counterparts. Can facilitate the endocytosis of acetylated components. This chain is Fibrinogen C domain-containing protein 1 (FIBCD1), found in Macaca fascicularis (Crab-eating macaque).